Reading from the N-terminus, the 70-residue chain is Cuticle protein 16 isoform b (70 aa).

This Limulus polyphemus (Atlantic horseshoe crab) protein is Cuticle protein 16 isoform b.